A 116-amino-acid chain; its full sequence is Phosphoribosyl-AMP cyclohydrolase (116 aa).

D81 serves as a coordination point for Mg(2+). Residue C82 participates in Zn(2+) binding. 2 residues coordinate Mg(2+): D83 and D85. Residues C98 and C105 each coordinate Zn(2+).

Belongs to the PRA-CH family. Homodimer. The cofactor is Mg(2+). It depends on Zn(2+) as a cofactor.

The protein localises to the cytoplasm. The enzyme catalyses 1-(5-phospho-beta-D-ribosyl)-5'-AMP + H2O = 1-(5-phospho-beta-D-ribosyl)-5-[(5-phospho-beta-D-ribosylamino)methylideneamino]imidazole-4-carboxamide. It functions in the pathway amino-acid biosynthesis; L-histidine biosynthesis; L-histidine from 5-phospho-alpha-D-ribose 1-diphosphate: step 3/9. In terms of biological role, catalyzes the hydrolysis of the adenine ring of phosphoribosyl-AMP. This Mycolicibacterium vanbaalenii (strain DSM 7251 / JCM 13017 / BCRC 16820 / KCTC 9966 / NRRL B-24157 / PYR-1) (Mycobacterium vanbaalenii) protein is Phosphoribosyl-AMP cyclohydrolase.